A 108-amino-acid chain; its full sequence is UPF0060 membrane protein RHOS4_03690 (108 aa).

Helical transmembrane passes span 5–25 (LAAY…VWAW), 32–52 (ALWL…LALT), 62–82 (AVYG…VEGV), and 86–106 (RWDM…LWAP).

This sequence belongs to the UPF0060 family.

The protein localises to the cell inner membrane. This is UPF0060 membrane protein RHOS4_03690 from Cereibacter sphaeroides (strain ATCC 17023 / DSM 158 / JCM 6121 / CCUG 31486 / LMG 2827 / NBRC 12203 / NCIMB 8253 / ATH 2.4.1.) (Rhodobacter sphaeroides).